The sequence spans 285 residues: MLSSAKHQRNHRLSATNKNQTLTKVSSISSSSPSSSSSSSSTSSSSPLPSQDSQAQKRSLVTMEEVWNDINLASIHHLNRHSPHPQHNHEPRFRGQNHHNQNPNSIFQDFLKGSLNQEPAPTSQTTGSAPNGDSTTVTVLYSSPFPPPATVLSLNSGAGFEFLDNQDPLVTSNSNLHTHHHLSNAHAFNTSFEALVPSSSFGKKRGQDSNEGSGNRRHKRMIKNRESAARSRARKQAYTNELELEVAHLQAENARLKRQQDQLKMAAAIQQPKKNTLQRSSTAPF.

Residues 1–12 (MLSSAKHQRNHR) are compositionally biased toward basic residues. Disordered stretches follow at residues 1-59 (MLSS…QKRS), 79-107 (NRHS…NSIF), 115-134 (LNQE…NGDS), 198-236 (SSSF…ARKQ), and 257-285 (KRQQ…TAPF). Residues 13–25 (LSATNKNQTLTKV) show a composition bias toward polar residues. Residues 26 to 50 (SSISSSSPSSSSSSSSTSSSSPLPS) show a composition bias toward low complexity. Over residues 98 to 107 (HHNQNPNSIF) the composition is skewed to polar residues. The bZIP domain maps to 214–277 (GNRRHKRMIK…AIQQPKKNTL (64 aa)). The segment at 216 to 235 (RRHKRMIKNRESAARSRARK) is basic motif. The leucine-zipper stretch occupies residues 242-263 (LELEVAHLQAENARLKRQQDQL). Positions 272–285 (PKKNTLQRSSTAPF) are enriched in polar residues. Thr282 bears the Phosphothreonine mark.

Belongs to the bZIP family. In terms of assembly, self-interacts. Interacts with FT and FDP/BZIP27. Interacts with GRF3 and GRF4, and in a calcium-independent manner, with CPK6 and CPK33. Post-translationally, phosphorylated at Thr-282 in a calcium-dependent manner by CPK6 and CPK33. Highly expressed in shoot apex.

The protein localises to the nucleus. Its function is as follows. Transcription factor required for the transition to flowering promoted by FT. The chain is Protein FD from Arabidopsis thaliana (Mouse-ear cress).